The sequence spans 254 residues: MVPWLGPDDPFPPIERALGPATGAPGLLAASADLLPSRLIDAYLRGIFPWYSDGQPVLWWSPDPRMILVPAEFKVSPSLRKTLKRVLREPEWEVRVDHDFPGVMRACAQAPRRGQRGTWITAEIIDAYTSLYRSGNAHSIETWHDGRRVGGLYGVSFGRMFFGESMYADATDASKIALATLVAHLREQGLEMIDCQQNTSHLASLGGREIARKAFVAHVRSAVAEPPIPWQFDKRVLAALTGRAEAAAPSGIER.

It belongs to the L/F-transferase family.

Its subcellular location is the cytoplasm. It carries out the reaction N-terminal L-lysyl-[protein] + L-leucyl-tRNA(Leu) = N-terminal L-leucyl-L-lysyl-[protein] + tRNA(Leu) + H(+). The enzyme catalyses N-terminal L-arginyl-[protein] + L-leucyl-tRNA(Leu) = N-terminal L-leucyl-L-arginyl-[protein] + tRNA(Leu) + H(+). The catalysed reaction is L-phenylalanyl-tRNA(Phe) + an N-terminal L-alpha-aminoacyl-[protein] = an N-terminal L-phenylalanyl-L-alpha-aminoacyl-[protein] + tRNA(Phe). Functionally, functions in the N-end rule pathway of protein degradation where it conjugates Leu, Phe and, less efficiently, Met from aminoacyl-tRNAs to the N-termini of proteins containing an N-terminal arginine or lysine. In Burkholderia lata (strain ATCC 17760 / DSM 23089 / LMG 22485 / NCIMB 9086 / R18194 / 383), this protein is Leucyl/phenylalanyl-tRNA--protein transferase.